We begin with the raw amino-acid sequence, 90 residues long: Small ribosomal subunit protein uS15c (90 aa).

This sequence belongs to the universal ribosomal protein uS15 family. In terms of assembly, part of the 30S ribosomal subunit.

It localises to the plastid. Its subcellular location is the chloroplast. This Lotus japonicus (Lotus corniculatus var. japonicus) protein is Small ribosomal subunit protein uS15c (rps15).